We begin with the raw amino-acid sequence, 407 residues long: 1-deoxy-D-xylulose 5-phosphate reductoisomerase (407 aa).

NADPH is bound by residues T25, G26, S27, I28, N53, and N136. K137 serves as a coordination point for 1-deoxy-D-xylulose 5-phosphate. E138 contacts NADPH. D162 provides a ligand contact to Mn(2+). The 1-deoxy-D-xylulose 5-phosphate site is built by S163, E164, S188, and H211. E164 contacts Mn(2+). G217 lines the NADPH pocket. Residues S224, N229, K230, and E233 each coordinate 1-deoxy-D-xylulose 5-phosphate. E233 is a binding site for Mn(2+).

This sequence belongs to the DXR family. Mg(2+) serves as cofactor. Requires Mn(2+) as cofactor.

The catalysed reaction is 2-C-methyl-D-erythritol 4-phosphate + NADP(+) = 1-deoxy-D-xylulose 5-phosphate + NADPH + H(+). Its pathway is isoprenoid biosynthesis; isopentenyl diphosphate biosynthesis via DXP pathway; isopentenyl diphosphate from 1-deoxy-D-xylulose 5-phosphate: step 1/6. Catalyzes the NADPH-dependent rearrangement and reduction of 1-deoxy-D-xylulose-5-phosphate (DXP) to 2-C-methyl-D-erythritol 4-phosphate (MEP). The polypeptide is 1-deoxy-D-xylulose 5-phosphate reductoisomerase (Nitrobacter hamburgensis (strain DSM 10229 / NCIMB 13809 / X14)).